We begin with the raw amino-acid sequence, 545 residues long: Chaperonin GroEL 1 (545 aa).

ATP contacts are provided by residues 30 to 33 (TLGP), lysine 51, 87 to 91 (DGTTT), glycine 415, and aspartate 495.

This sequence belongs to the chaperonin (HSP60) family. In terms of assembly, forms a cylinder of 14 subunits composed of two heptameric rings stacked back-to-back. Interacts with the co-chaperonin GroES.

Its subcellular location is the cytoplasm. It catalyses the reaction ATP + H2O + a folded polypeptide = ADP + phosphate + an unfolded polypeptide.. Together with its co-chaperonin GroES, plays an essential role in assisting protein folding. The GroEL-GroES system forms a nano-cage that allows encapsulation of the non-native substrate proteins and provides a physical environment optimized to promote and accelerate protein folding. This Rhizobium etli (strain ATCC 51251 / DSM 11541 / JCM 21823 / NBRC 15573 / CFN 42) protein is Chaperonin GroEL 1.